The following is a 252-amino-acid chain: 5-oxoprolinase subunit A 1 (252 aa).

The protein belongs to the LamB/PxpA family. In terms of assembly, forms a complex composed of PxpA, PxpB and PxpC.

The enzyme catalyses 5-oxo-L-proline + ATP + 2 H2O = L-glutamate + ADP + phosphate + H(+). Catalyzes the cleavage of 5-oxoproline to form L-glutamate coupled to the hydrolysis of ATP to ADP and inorganic phosphate. The polypeptide is 5-oxoprolinase subunit A 1 (Bordetella bronchiseptica (strain ATCC BAA-588 / NCTC 13252 / RB50) (Alcaligenes bronchisepticus)).